The sequence spans 394 residues: MVAGTRCLLVLLLPQVLLGGAAGLIPELGRKKFAAASSRPLSRPSEDVLSEFELRLLSMFGLKQRPTPSKDVVVPPYMLDLYRRHSGQPGAPAPDHRLERAASRANTVRSFHHEEAVEELPEMSGKTARRFFFNLSSVPSDEFLTSAELQIFREQIQEALGNSSFQHRINIYEIIKPAAANLKFPVTRLLDTRLVNQNTSQWESFDVTPAVMRWTTQGHTNHGFVVEVAHLEENPGVSKRHVRISRSLHQDEHSWSQIRPLLVTFGHDGKGHPLHKREKRQAKHKQRKRLKSSCKRHPLYVDFSDVGWNDWIVAPPGYHAFYCHGECPFPLADHLNSTNHAIVQTLVNSVNSKIPKACCVPTELSAISMLYLDENEKVVLKNYQDMVVEGCGCR.

A signal peptide spans 1-19 (MVAGTRCLLVLLLPQVLLG). Positions 20-280 (GAAGLIPELG…GHPLHKREKR (261 aa)) are cleaved as a propeptide — cleaved by PCSK5. S86 is subject to Phosphoserine. N-linked (GlcNAc...) asparagine glycosylation is found at N134, N162, and N198. The interval 269 to 291 (GKGHPLHKREKRQAKHKQRKRLK) is disordered. The span at 272-291 (HPLHKREKRQAKHKQRKRLK) shows a compositional bias: basic residues. Disulfide bonds link C294/C359, C323/C391, and C327/C393. Residue N336 is glycosylated (N-linked (GlcNAc...) asparagine).

Belongs to the TGF-beta family. As to quaternary structure, homodimer; disulfide-linked. Interacts with SOSTDC1. Interacts with GREM2, RGMA, RGMB and RGMC. Interacts with ASPN. Interacts with MAFP5. Interacts with FBN1 (via N-terminal domain) and FBN2. Interacts with type I receptor BMPR1A. Interacts with type II receptor BMPR2. Interacts with SCUBE3. Interacts with TNFAIP6 (primarily via Link domain); this interaction is inhibited by hyaluronan. Interacts with ERFE. Interacts with BMPR1A/ALK3; the interaction may induce HAMP expression. Forms heterodimers with BMP6 in vitro; the heterodimer then binds to its receptor BMPR1A /ALK3 and may induce HAMP expression. Interacts with TGFBR3.

The protein resides in the secreted. Growth factor of the TGF-beta superfamily that plays essential roles in many developmental processes, including cardiogenesis, neurogenesis, and osteogenesis. Induces cartilage and bone formation. Initiates the canonical BMP signaling cascade by associating with type I receptor BMPR1A and type II receptor BMPR2. Once all three components are bound together in a complex at the cell surface, BMPR2 phosphorylates and activates BMPR1A. In turn, BMPR1A propagates signal by phosphorylating SMAD1/5/8 that travel to the nucleus and act as activators and repressors of transcription of target genes. Also acts to promote expression of HAMP, via the interaction with its receptor BMPR1A/ALK3. Can also signal through non-canonical pathways such as ERK/MAP kinase signaling cascade that regulates osteoblast differentiation. Also stimulates the differentiation of myoblasts into osteoblasts via the EIF2AK3-EIF2A-ATF4 pathway by stimulating EIF2A phosphorylation which leads to increased expression of ATF4 which plays a central role in osteoblast differentiation. Acts as a positive regulator of odontoblast differentiation during mesenchymal tooth germ formation, expression is repressed during the bell stage by MSX1-mediated inhibition of CTNNB1 signaling. The chain is Bone morphogenetic protein 2 (Bmp2) from Mus musculus (Mouse).